The following is a 380-amino-acid chain: NADPH oxidoreductase (380 aa).

The FAD-binding FR-type domain occupies 58–164; the sequence is ARELRGRILG…AAPQGNFVLP (107 aa). Residues 299–380 enclose the 2Fe-2S ferredoxin-type domain; that stretch reads GTVTFARSGK…AASGDCVLDI (82 aa). Cys-333, Cys-338, Cys-341, and Cys-368 together coordinate [2Fe-2S] cluster.

Interacts with DesA3 to form a functional acyl-CoA desaturase complex. It depends on [2Fe-2S] cluster as a cofactor. FAD is required as a cofactor.

The protein resides in the cell membrane. Its pathway is lipid metabolism; fatty acid metabolism. In terms of biological role, is likely involved in the aerobic desaturation system responsible for the synthesis of oleic acid from stearoyl-CoA; oleic acid is a precursor of mycobacterial membrane phospholipids and triglycerides. Is the electron transfer partner for the stearoyl-CoA 9-desaturase DesA3. Catalyzes electron transfer reaction between NADPH and the diiron center of DesA3. Cannot use NADH. The chain is NADPH oxidoreductase from Mycobacterium tuberculosis (strain ATCC 25618 / H37Rv).